Reading from the N-terminus, the 298-residue chain is Inosose dehydratase (298 aa).

Belongs to the IolE/MocC family. The cofactor is glutathione. Co(2+) serves as cofactor. Requires Mn(2+) as cofactor.

It catalyses the reaction scyllo-inosose = 3D-3,5/4-trihydroxycyclohexane-1,2-dione + H2O. Its pathway is polyol metabolism; myo-inositol degradation into acetyl-CoA; acetyl-CoA from myo-inositol: step 2/7. In terms of biological role, catalyzes the dehydration of inosose (2-keto-myo-inositol, 2KMI or 2,4,6/3,5-pentahydroxycyclohexanone) to 3D-(3,5/4)-trihydroxycyclohexane-1,2-dione (D-2,3-diketo-4-deoxy-epi-inositol). The sequence is that of Inosose dehydratase from Bacillus anthracis (strain CDC 684 / NRRL 3495).